A 211-amino-acid polypeptide reads, in one-letter code: MDLERGSKTPPSSAPAAAAATTTTSTCCSNKRPQLRDRLVALQPVVLRAAATLATAVAAAVMALNAQSYTAVVAIVGTRPLTQTFTTKFRDTPAFVYFVIANAIAAVYNLVMLLFRCLILRRRMAGLVVHMLDMVIMALLATGAATAAAMAELGKNGNVHARWNPICDRFGSFCSRGGVALASSFTGVALMLALNLLSAASNAQCSPGQYE.

The disordered stretch occupies residues 1-29 (MDLERGSKTPPSSAPAAAAATTTTSTCCS). Over 1-55 (MDLERGSKTPPSSAPAAAAATTTTSTCCSNKRPQLRDRLVALQPVVLRAAATLAT) the chain is Cytoplasmic. Over residues 9–26 (TPPSSAPAAAAATTTTST) the composition is skewed to low complexity. The chain crosses the membrane as a helical span at residues 56-76 (AVAAAVMALNAQSYTAVVAIV). At 77–94 (GTRPLTQTFTTKFRDTPA) the chain is on the extracellular side. The chain crosses the membrane as a helical span at residues 95-115 (FVYFVIANAIAAVYNLVMLLF). Topologically, residues 116 to 123 (RCLILRRR) are cytoplasmic. Residues 124–144 (MAGLVVHMLDMVIMALLATGA) form a helical membrane-spanning segment. Topologically, residues 145 to 176 (ATAAAMAELGKNGNVHARWNPICDRFGSFCSR) are extracellular. Residues 177–197 (GGVALASSFTGVALMLALNLL) form a helical membrane-spanning segment. Over 198 to 211 (SAASNAQCSPGQYE) the chain is Cytoplasmic.

The protein belongs to the Casparian strip membrane proteins (CASP) family. Homodimer and heterodimers.

It is found in the cell membrane. This chain is CASP-like protein 1B1, found in Sorghum bicolor (Sorghum).